Reading from the N-terminus, the 532-residue chain is ATP-dependent RNA helicase DBP3 (532 aa).

A disordered region spans residues 1 to 78 (MGKRDRTEDD…EVAEEKPKMT (78 aa)). Basic residues predominate over residues 15–58 (KKVKLDKKDKKEKKEKKDKKDKKDKKDKKDKKDKKEKKEKKEKK). Residues 126–152 (MEFSHVTLDPRITKVLTKFPRPTPIQA) carry the Q motif motif. One can recognise a Helicase ATP-binding domain in the interval 155–327 (WPYLLAGKDM…EGFMKTPTKV (173 aa)). 168–175 (AETGSGKT) is a binding site for ATP. The DEAD box motif lies at 274-277 (DEAD). The 147-residue stretch at 356 to 502 (RLLDLLRQYA…PVPDELLKFG (147 aa)) folds into the Helicase C-terminal domain.

Belongs to the DEAD box helicase family. DDX5/DBP2 subfamily.

It localises to the nucleus. Its subcellular location is the nucleolus. The catalysed reaction is ATP + H2O = ADP + phosphate + H(+). In terms of biological role, ATP-dependent RNA helicase required for 60S ribosomal subunit synthesis. Involved in efficient pre-rRNA processing, predominantly at site A3, which is necessary for the normal formation of 25S and 5.8S rRNAs. This is ATP-dependent RNA helicase DBP3 (DBP3) from Yarrowia lipolytica (strain CLIB 122 / E 150) (Yeast).